A 261-amino-acid chain; its full sequence is Calcium-binding protein 8 (261 aa).

A disordered region spans residues 1-39 (MRLPEQPGEGKPENEKKGDGGALGGGEEPPRSQAPDFPT). Residues 1 to 234 (MRLPEQPGEG…QNRQTCVRKS (234 aa)) lie on the Cytoplasmic side of the membrane. The span at 8 to 19 (GEGKPENEKKGD) shows a compositional bias: basic and acidic residues. EF-hand domains lie at 78–113 (EELDEIREAFRVLDRDGNGFISKQELGMAMRSLGYM) and 114–149 (PSEVELAIIMQRLDMDGDGQVDFDEFMTILGPKLVS). Residues Asp91, Asp93, Asn95, Glu102, Asp127, Asp129, Asp131, Gln133, and Glu138 each coordinate Ca(2+). Residues 235 to 255 (LICAFAMAFIISVMLIAANQI) traverse the membrane as a helical; Anchor for type IV membrane protein segment. Topologically, residues 256–261 (LRSGME) are extracellular.

Interacts with PI4KB. This binding competes with FREQ/NCS1 binding in a calcium-dependent manner. As to expression, brain specific.

The protein resides in the golgi apparatus. It is found in the trans-Golgi network membrane. It localises to the cytoplasm. The protein localises to the perinuclear region. Its subcellular location is the cell membrane. Functionally, negatively regulates Golgi-to-plasma membrane trafficking by interacting with PI4KB and inhibiting its activity. May play a role in the physiology of neurons and is potentially important in memory and learning. The protein is Calcium-binding protein 8 (CALN1) of Homo sapiens (Human).